The sequence spans 358 residues: Zinc-type alcohol dehydrogenase-like protein YogA (358 aa).

This sequence belongs to the zinc-containing alcohol dehydrogenase family. Quinone oxidoreductase subfamily.

It functions in the pathway secondary metabolite biosynthesis. Zinc-type alcohol dehydrogenase-like protein; part of the gene cluster that mediates the biosynthesis of phomenoic acid, a long chain aliphatic carboxylic acid that does not appear to be essential for pathogenicity but may play a role in allowing to outcompete other fungi in the environmental niche via its antifungal properties. The polyketide synthase produces the long methylated aliphatic carboxylic acid chain of phomenoic acid. The cluster-specific cytochrome P450 monooxygenase may then hydroxylate the methyl group of carbon 31. The putative dehydrogenase YogA, which has no obvious role in phomenoic acid biosynthesis, may further modify phomenoic acid to produce a compound not identified yet. The polypeptide is Zinc-type alcohol dehydrogenase-like protein YogA (Leptosphaeria maculans (strain JN3 / isolate v23.1.3 / race Av1-4-5-6-7-8) (Blackleg fungus)).